The following is a 318-amino-acid chain: Olfactory receptor 10H1 (318 aa).

The Extracellular portion of the chain corresponds to 1–25; it reads MQRANHSTVTQFILVGFSVFPHLQL. An N-linked (GlcNAc...) asparagine glycan is attached at Asn5. The helical transmembrane segment at 26-46 threads the bilayer; it reads MLFLLFLLMYLFTLLGNLLIM. The Cytoplasmic segment spans residues 47–54; the sequence is ATVWSERS. Residues 55–75 traverse the membrane as a helical segment; the sequence is LHTPMYLFLCALSVSEILYTV. Over 76 to 99 the chain is Extracellular; it reads AIIPRMLADLLSTQRSIAFLACAS. An intrachain disulfide couples Cys97 to Cys189. Residues 100–120 traverse the membrane as a helical segment; that stretch reads QMFFSFSFGFTHSFLLTVMGY. Over 121–139 the chain is Cytoplasmic; the sequence is DRYVAICHPLRYNVLMSPR. A helical membrane pass occupies residues 140–160; sequence GCACLVGCSWAGGLVMGMVVT. The Extracellular segment spans residues 161 to 197; it reads SAIFHLAFCGHKEIHHFACHVPPLLKLACGDDVLVVA. Residues 198 to 218 form a helical membrane-spanning segment; sequence KGVGLVCITALLGCFLLILLS. Residues 219–238 are Cytoplasmic-facing; the sequence is YAFIVAAILKIPSAEGRNKA. A helical membrane pass occupies residues 239-259; sequence FSTCASHLTVVVVHYGFASVI. At 260–272 the chain is on the extracellular side; the sequence is YLKPKSPQSLEGD. Residues 273–293 form a helical membrane-spanning segment; that stretch reads TLMGITYTVLTPFLSPIIFSL. The Cytoplasmic portion of the chain corresponds to 294–318; sequence RNKELKVAMKKTFFSKLYPEKNVMM.

Belongs to the G-protein coupled receptor 1 family.

The protein resides in the cell membrane. In terms of biological role, odorant receptor. This Homo sapiens (Human) protein is Olfactory receptor 10H1 (OR10H1).